We begin with the raw amino-acid sequence, 101 residues long: Small ribosomal subunit protein uS14 (101 aa).

This sequence belongs to the universal ribosomal protein uS14 family. In terms of assembly, part of the 30S ribosomal subunit. Contacts proteins S3 and S10.

In terms of biological role, binds 16S rRNA, required for the assembly of 30S particles and may also be responsible for determining the conformation of the 16S rRNA at the A site. This chain is Small ribosomal subunit protein uS14, found in Opitutus terrae (strain DSM 11246 / JCM 15787 / PB90-1).